The following is a 188-amino-acid chain: Sec-independent protein translocase protein TatB (188 aa).

The helical transmembrane segment at methionine 1–glycine 21 threads the bilayer. The segment at leucine 147–serine 188 is disordered. Over residues aspartate 160–alanine 170 the composition is skewed to low complexity.

The protein belongs to the TatB family. The Tat system comprises two distinct complexes: a TatABC complex, containing multiple copies of TatA, TatB and TatC subunits, and a separate TatA complex, containing only TatA subunits. Substrates initially bind to the TatABC complex, which probably triggers association of the separate TatA complex to form the active translocon.

It localises to the cell inner membrane. Part of the twin-arginine translocation (Tat) system that transports large folded proteins containing a characteristic twin-arginine motif in their signal peptide across membranes. Together with TatC, TatB is part of a receptor directly interacting with Tat signal peptides. TatB may form an oligomeric binding site that transiently accommodates folded Tat precursor proteins before their translocation. This is Sec-independent protein translocase protein TatB from Rhodopseudomonas palustris (strain HaA2).